The sequence spans 162 residues: MSQLTHINAAGEAHMVDVSGKAETVREARAEAYVEMQATTLAMIIDGSHHKGDVFATARIAGIQAAKRTWELIPLCHPLMLSKVEVNLQAQPEHNRVRIESLCRLTGKTGVEMEALTAASVAALTIYDMCKAVQKDMVIGPVRLLAKSGGKSGDFKVGECHD.

Substrate contacts are provided by residues 75 to 77 and 113 to 114; these read LCH and ME. Asp128 is a catalytic residue.

The protein belongs to the MoaC family. In terms of assembly, homohexamer; trimer of dimers.

The catalysed reaction is (8S)-3',8-cyclo-7,8-dihydroguanosine 5'-triphosphate = cyclic pyranopterin phosphate + diphosphate. It functions in the pathway cofactor biosynthesis; molybdopterin biosynthesis. In terms of biological role, catalyzes the conversion of (8S)-3',8-cyclo-7,8-dihydroguanosine 5'-triphosphate to cyclic pyranopterin monophosphate (cPMP). The protein is Cyclic pyranopterin monophosphate synthase of Klebsiella pneumoniae subsp. pneumoniae (strain ATCC 700721 / MGH 78578).